We begin with the raw amino-acid sequence, 531 residues long: Putative F-box protein At2g02890 (531 aa).

In terms of domain architecture, F-box spans 141–188 (RHSSSLTNDLIEEILSRLHSKSVARFRCVSKQCASMFASPYFKKLFQT).

This chain is Putative F-box protein At2g02890, found in Arabidopsis thaliana (Mouse-ear cress).